Here is a 1026-residue protein sequence, read N- to C-terminus: Multidrug resistance protein MdtC (1026 aa).

11 consecutive transmembrane segments (helical) span residues 12–32 (VATT…FSLL), 333–353 (EVEQ…FIFL), 360–380 (LIPA…MYLC), 387–407 (LSLM…IVVL), 431–451 (VGFT…PLLL), 463–483 (FAVT…TLTP), 528–548 (WVLA…VSIP), 853–873 (LLLI…LYES), 897–917 (LFGA…IGIV), 953–973 (PIMM…LTHG), and 984–1004 (ITIV…TPVV).

Belongs to the resistance-nodulation-cell division (RND) (TC 2.A.6) family. MdtC subfamily. In terms of assembly, part of a tripartite efflux system composed of MdtA, MdtB and MdtC. MdtC forms a heteromultimer with MdtB.

The protein localises to the cell inner membrane. The polypeptide is Multidrug resistance protein MdtC (Serratia proteamaculans (strain 568)).